A 1499-amino-acid chain; its full sequence is DNA-directed RNA polymerase subunit beta' (1499 aa).

Zn(2+) is bound by residues cysteine 67, cysteine 69, cysteine 82, and cysteine 85. The Mg(2+) site is built by aspartate 499, aspartate 501, and aspartate 503. Zn(2+) is bound by residues cysteine 867, cysteine 943, cysteine 950, and cysteine 953.

This sequence belongs to the RNA polymerase beta' chain family. As to quaternary structure, the RNAP catalytic core consists of 2 alpha, 1 beta, 1 beta' and 1 omega subunit. When a sigma factor is associated with the core the holoenzyme is formed, which can initiate transcription. Mg(2+) serves as cofactor. Zn(2+) is required as a cofactor.

It carries out the reaction RNA(n) + a ribonucleoside 5'-triphosphate = RNA(n+1) + diphosphate. DNA-dependent RNA polymerase catalyzes the transcription of DNA into RNA using the four ribonucleoside triphosphates as substrates. The chain is DNA-directed RNA polymerase subunit beta' from Prosthecochloris aestuarii (strain DSM 271 / SK 413).